A 310-amino-acid polypeptide reads, in one-letter code: S-adenosylmethionine-dependent nucleotide dehydratase (310 aa).

The Radical SAM core domain occupies 3–221; the sequence is PAIPPTINLH…VERHRKVESS (219 aa). Cys17, Cys21, and Cys24 together coordinate [4Fe-4S] cluster.

This sequence belongs to the radical SAM superfamily. Viperin family. [4Fe-4S] cluster is required as a cofactor.

It carries out the reaction GTP + AH2 + S-adenosyl-L-methionine = 3'-deoxy-3',4'-didehydro-GTP + 5'-deoxyadenosine + L-methionine + A + H2O + H(+). In terms of biological role, expression of pVip15 in E.coli (strain MG1655) confers resistance to phage T7; prevents culture collapse upon infection. Catalyzes the conversion of guanosine triphosphate (GTP) to 3'-deoxy-3',4'-didehydro-GTP (ddhGTP), probably via a SAM-dependent radical mechanism. The modified nucleotide represses transcription from T7 RNA polymerase-directed genes (possibly by acting as chain terminators), strongly suggesting these nucleotides block viral polymerase transcription. The sequence is that of S-adenosylmethionine-dependent nucleotide dehydratase from Coraliomargarita akajimensis (strain DSM 45221 / IAM 15411 / JCM 23193 / KCTC 12865 / 04OKA010-24).